The following is a 204-amino-acid chain: FMN-dependent NADH:quinone oxidoreductase (204 aa).

FMN-binding positions include Ser-10, 16–18, and 96–99; these read SIS and MYNF.

Belongs to the azoreductase type 1 family. In terms of assembly, homodimer. Requires FMN as cofactor.

It catalyses the reaction 2 a quinone + NADH + H(+) = 2 a 1,4-benzosemiquinone + NAD(+). It carries out the reaction N,N-dimethyl-1,4-phenylenediamine + anthranilate + 2 NAD(+) = 2-(4-dimethylaminophenyl)diazenylbenzoate + 2 NADH + 2 H(+). In terms of biological role, quinone reductase that provides resistance to thiol-specific stress caused by electrophilic quinones. Also exhibits azoreductase activity. Catalyzes the reductive cleavage of the azo bond in aromatic azo compounds to the corresponding amines. The polypeptide is FMN-dependent NADH:quinone oxidoreductase (Herminiimonas arsenicoxydans).